The sequence spans 150 residues: Protein adenylyltransferase MntA (150 aa).

The GSX(10)DXD motif motif lies at 32–46 (GSRATGNINANSDWD). Catalysis depends on residues D44 and D46. Mg(2+) is bound by residues D44, D46, and D86.

Belongs to the MntA antitoxin family. In terms of assembly, forms a complex with HepT, probably MntA(1):HepT(2) in vivo; can only be purified when both 'Arg-102' and 'Tyr-109' (or 'His-107' and 'Tyr-109') of HepThave been mutated. The fully di-AMPylated HepT homodimer is not found in a complex with MntA. Requires Mg(2+) as cofactor.

The catalysed reaction is L-tyrosyl-[protein] + ATP = O-(5'-adenylyl)-L-tyrosyl-[protein] + diphosphate. It carries out the reaction O-(5'-adenylyl)-L-tyrosyl-[protein] + ATP = O-[5'-(adenylyl-(5'-&gt;3')-adenylyl)]-L-tyrosyl-[protein] + diphosphate. Functionally, antitoxin component of a type VII toxin-antitoxin (TA) system. Upon cloning in E.coli neutralizes the effect of cognate toxin HepT. Neutralization is mostly due to di-AMPylation of toxin by this enzyme. Successively di-AMPylates HepT on 'Tyr-109'. In vitro will use ATP, dATP, GTP, dGTP, TTP or UTP to generate a mono-modified protein, but requires a purine nucleotide for the second modification reaction (ATP, dATP or GTP). The chain is Protein adenylyltransferase MntA from Aphanizomenon flos-aquae (strain 2012/KM1/D3).